The chain runs to 309 residues: UDP-N-acetylenolpyruvoylglucosamine reductase (309 aa).

One can recognise an FAD-binding PCMH-type domain in the interval 34 to 221 (RVGGPAQVLF…TAAREAAQPI (188 aa)). The active site involves arginine 179. The active-site Proton donor is serine 228. Glutamate 298 is a catalytic residue.

The protein belongs to the MurB family. FAD is required as a cofactor.

It is found in the cytoplasm. The catalysed reaction is UDP-N-acetyl-alpha-D-muramate + NADP(+) = UDP-N-acetyl-3-O-(1-carboxyvinyl)-alpha-D-glucosamine + NADPH + H(+). Its pathway is cell wall biogenesis; peptidoglycan biosynthesis. In terms of biological role, cell wall formation. The chain is UDP-N-acetylenolpyruvoylglucosamine reductase from Methylorubrum extorquens (strain PA1) (Methylobacterium extorquens).